A 461-amino-acid chain; its full sequence is Cysteine--tRNA ligase (461 aa).

Cys-28 contributes to the Zn(2+) binding site. Residues 30–40 (ITIYDLCHIGH) carry the 'HIGH' region motif. Positions 209, 234, and 238 each coordinate Zn(2+). The 'KMSKS' region motif lies at 266-270 (KMSKS). Lys-269 is a binding site for ATP.

The protein belongs to the class-I aminoacyl-tRNA synthetase family. As to quaternary structure, monomer. Zn(2+) is required as a cofactor.

It is found in the cytoplasm. The catalysed reaction is tRNA(Cys) + L-cysteine + ATP = L-cysteinyl-tRNA(Cys) + AMP + diphosphate. This chain is Cysteine--tRNA ligase, found in Yersinia pestis bv. Antiqua (strain Antiqua).